Consider the following 185-residue polypeptide: TATA-box-binding protein (185 aa).

2 tandem repeats follow at residues 3–78 (IQNI…REDL) and 94–176 (IQNI…AEKI).

This sequence belongs to the TBP family.

Functionally, general factor that plays a role in the activation of archaeal genes transcribed by RNA polymerase. Binds specifically to the TATA box promoter element which lies close to the position of transcription initiation. The polypeptide is TATA-box-binding protein (Methanopyrus kandleri (strain AV19 / DSM 6324 / JCM 9639 / NBRC 100938)).